Here is a 306-residue protein sequence, read N- to C-terminus: tRNA dimethylallyltransferase (306 aa).

15 to 22 (GPTASGKS) is a binding site for ATP. Position 17 to 22 (17 to 22 (TASGKS)) interacts with substrate. The tract at residues 40–43 (DSMQ) is interaction with substrate tRNA.

Belongs to the IPP transferase family. As to quaternary structure, monomer. Requires Mg(2+) as cofactor.

It catalyses the reaction adenosine(37) in tRNA + dimethylallyl diphosphate = N(6)-dimethylallyladenosine(37) in tRNA + diphosphate. Catalyzes the transfer of a dimethylallyl group onto the adenine at position 37 in tRNAs that read codons beginning with uridine, leading to the formation of N6-(dimethylallyl)adenosine (i(6)A). The polypeptide is tRNA dimethylallyltransferase (Methylobacterium sp. (strain 4-46)).